A 253-amino-acid polypeptide reads, in one-letter code: Sulfate transporter CysZ (253 aa).

A run of 4 helical transmembrane segments spans residues 27 to 47 (FVLL…YLAV), 71 to 91 (ILWP…FTVV), 150 to 170 (LFIL…WLLF), and 211 to 231 (IVYV…AAVA).

Belongs to the CysZ family.

Its subcellular location is the cell inner membrane. Its function is as follows. High affinity, high specificity proton-dependent sulfate transporter, which mediates sulfate uptake. Provides the sulfur source for the cysteine synthesis pathway. This is Sulfate transporter CysZ from Pseudomonas syringae pv. tomato (strain ATCC BAA-871 / DC3000).